Reading from the N-terminus, the 198-residue chain is Holliday junction resolvase RecU (198 aa).

The tract at residues 1–22 (MVNYPHKVSSQKRQTSLSQPKN) is disordered. A compositionally biased stretch (polar residues) spans 11-22 (QKRQTSLSQPKN). Residues T81, D83, E96, and Q115 each coordinate Mg(2+).

Belongs to the RecU family. Requires Mg(2+) as cofactor.

Its subcellular location is the cytoplasm. The catalysed reaction is Endonucleolytic cleavage at a junction such as a reciprocal single-stranded crossover between two homologous DNA duplexes (Holliday junction).. Its function is as follows. Endonuclease that resolves Holliday junction intermediates in genetic recombination. Cleaves mobile four-strand junctions by introducing symmetrical nicks in paired strands. Promotes annealing of linear ssDNA with homologous dsDNA. Required for DNA repair, homologous recombination and chromosome segregation. In Streptococcus pneumoniae serotype 2 (strain D39 / NCTC 7466), this protein is Holliday junction resolvase RecU.